Reading from the N-terminus, the 513-residue chain is Probable DNA ligase (513 aa).

E213 serves as a coordination point for ATP. The active-site N6-AMP-lysine intermediate is K215. Positions 220, 235, 264, 304, 376, and 382 each coordinate ATP.

It belongs to the ATP-dependent DNA ligase family. Mg(2+) serves as cofactor.

It carries out the reaction ATP + (deoxyribonucleotide)n-3'-hydroxyl + 5'-phospho-(deoxyribonucleotide)m = (deoxyribonucleotide)n+m + AMP + diphosphate.. Its function is as follows. DNA ligase that seals nicks in double-stranded DNA during DNA replication, DNA recombination and DNA repair. The sequence is that of Probable DNA ligase from Anaeromyxobacter dehalogenans (strain 2CP-C).